Here is an 89-residue protein sequence, read N- to C-terminus: Small ribosomal subunit protein uS15 (89 aa).

This sequence belongs to the universal ribosomal protein uS15 family. As to quaternary structure, part of the 30S ribosomal subunit. Forms a bridge to the 50S subunit in the 70S ribosome, contacting the 23S rRNA.

One of the primary rRNA binding proteins, it binds directly to 16S rRNA where it helps nucleate assembly of the platform of the 30S subunit by binding and bridging several RNA helices of the 16S rRNA. Its function is as follows. Forms an intersubunit bridge (bridge B4) with the 23S rRNA of the 50S subunit in the ribosome. In Streptococcus gordonii (strain Challis / ATCC 35105 / BCRC 15272 / CH1 / DL1 / V288), this protein is Small ribosomal subunit protein uS15.